The sequence spans 434 residues: [Pyruvate dehydrogenase (acetyl-transferring)] kinase isozyme 1, mitochondrial (434 aa).

The N-terminal 26 residues, 1–26 (MRLARLLRGGTSVRPLCAVPCASRSL), are a transit peptide targeting the mitochondrion. Phosphotyrosine; by FGFR1 is present on Tyr-136. The 231-residue stretch at 161–391 (TEYKESFGVD…DAVIYIKALS (231 aa)) folds into the Histidine kinase domain. Tyr-241 carries the post-translational modification Phosphotyrosine; by FGFR1, ABL1, FLT3 and JAK2. Phosphotyrosine; by FGFR1 is present on Tyr-242. Residues 277 to 284 (ELFKNAMR), Asp-316, 335 to 336 (ST), and 352 to 357 (GFGYGL) each bind ATP. Thr-336 carries the post-translational modification Phosphothreonine. N6-succinyllysine is present on Lys-403.

The protein belongs to the PDK/BCKDK protein kinase family. As to quaternary structure, homodimer, and heterodimer with PDK2. Interacts with the pyruvate dehydrogenase complex subunit DLAT, and is part of the multimeric pyruvate dehydrogenase complex that contains multiple copies of pyruvate dehydrogenase (E1), dihydrolipoamide acetyltransferase (DLAT, E2) and lipoamide dehydrogenase (DLD, E3). Interacts with phosphoglycerate kinase PGK1; the interaction is direct, occurs under hypoxic conditions and leads to PDK1-mediated inhibition of pyruvate dehydrogenase complex activity. Post-translationally, phosphorylated by constitutively activated ABL1, FGFR1, FLT3 and JAK2 (in vitro), and this may also occur in cancer cells that express constitutively activated ABL1, FGFR1, FLT3 and JAK2. Phosphorylation at Tyr-241 and Tyr-242 strongly increases kinase activity, while phosphorylation at Tyr-136 has a lesser effect. Phosphorylated under hypoxic conditions at Thr-336 by phosphoglycerate kinase PGK1 which has an activating effect. In terms of tissue distribution, detected in pancreas islets (at protein level). Expressed predominantly in the heart.

It localises to the mitochondrion matrix. It catalyses the reaction L-seryl-[pyruvate dehydrogenase E1 alpha subunit] + ATP = O-phospho-L-seryl-[pyruvate dehydrogenase E1 alpha subunit] + ADP + H(+). Activated by binding to the pyruvate dehydrogenase complex subunit DLAT. Strongly activated by NADH plus acetyl-coenzyme A. Inhibited by dichloroacetate. Functionally, kinase that plays a key role in regulation of glucose and fatty acid metabolism and homeostasis via phosphorylation of the pyruvate dehydrogenase subunits PDHA1 and PDHA2. This inhibits pyruvate dehydrogenase activity, and thereby regulates metabolite flux through the tricarboxylic acid cycle, down-regulates aerobic respiration and inhibits the formation of acetyl-coenzyme A from pyruvate. Plays an important role in cellular responses to hypoxia and is important for cell proliferation under hypoxia. In Rattus norvegicus (Rat), this protein is [Pyruvate dehydrogenase (acetyl-transferring)] kinase isozyme 1, mitochondrial (Pdk1).